A 341-amino-acid chain; its full sequence is Protein huluwa (341 aa).

Topologically, residues 1–36 (MVTLSPAYLPSDGGTQAASAAPSVEENWVVQPSLTL) are extracellular. A helical membrane pass occupies residues 37–57 (LVLLLVPCVLLLFFLNCFLLF). At 58–341 (HRLPAFSLRK…PMMCSKQYWI (284 aa)) the chain is on the cytoplasmic side. Positions 206–211 (VPPNTP) match the VPPNSP motif motif.

It belongs to the huluwa family. As to quaternary structure, interacts with axin1; leading to promote the tankyrase-mediated degradation of axin. Interacts with axin2; leading to promote the tankyrase-mediated degradation of axin.

The protein localises to the cell membrane. Functionally, key maternal determinant of the dorsal organizer and body axis formation in vertebrates that acts by promoting stabilization of beta-catenin (ctnnb1). Localizes on the plasma membrane of the future dorsal blastomeres in early blastulas and binds to and promotes the tankyrase-mediated degradation of axin (axin1 and axin2). Axin degradation results in stabilization and nuclear translocation of beta-catenin (ctnnb1) for activating organizer-specific target gene expression. The polypeptide is Protein huluwa (Xenopus laevis (African clawed frog)).